The chain runs to 933 residues: Clumping factor A (933 aa).

The N-terminal stretch at 1 to 39 is a signal peptide; the sequence is MNMKKKEKHAIRKKSIGVASVLVGTLIGFGLLSSKEADA. The short motif at 9 to 20 is the YSIRK-G/S signaling motif element; sequence HAIRKKSIGVAS. 2 disordered regions span residues 34–200 and 529–904; these read SKEA…SNKD and FNNG…SEDE. The ligand binding A region stretch occupies residues 40–542; that stretch reads SENSVTQSDS…SGSGDGIDKP (503 aa). Residues 47–65 show a composition bias toward low complexity; sequence SDSASNESKSNDSSSVSAA. The span at 71–105 shows a compositional bias: polar residues; that stretch reads TNVSDTKTSSNTNNGETSVAQNPAQQETTQSSSTN. Low complexity-rich tracts occupy residues 106–132 and 143–162; these read ATTE…ATTQ and NQTS…SVNS. Over residues 163–200 the composition is skewed to polar residues; it reads PQNSTNAENVSTTQDTSTEATPSNNESAPQSTDASNKD. Over residues 547-565 the composition is skewed to acidic residues; it reads QPDEPGEIEPIPEDSDSDP. Residues 566–598 are compositionally biased toward low complexity; it reads GSDSGSDSNSDSGSDSGSDSTSDSGSDSASDSD. The segment covering 599-861 has biased composition (acidic residues); sequence SASDSDSASD…DSDSESDSNS (263 aa). Over residues 862–880 the composition is skewed to low complexity; it reads DSESGSNNNVVPPNSPKNG. The segment covering 887-896 has biased composition (basic and acidic residues); the sequence is NEAKDSKEPL. Positions 896–900 match the LPXTG sorting signal motif; that stretch reads LPDTG. Threonine 899 is modified (pentaglycyl murein peptidoglycan amidated threonine). Positions 900–933 are cleaved as a propeptide — removed by sortase; the sequence is GSEDEANTSLIWGLLASIGSLLLFRRKKENKDKK.

It belongs to the serine-aspartate repeat-containing protein (SDr) family.

The protein resides in the secreted. Its subcellular location is the cell wall. Its function is as follows. Cell surface-associated protein implicated in virulence. Promotes bacterial attachment exclusively to the gamma-chain of human fibrinogen. Induces formation of bacterial clumps. This is Clumping factor A (clfA) from Staphylococcus aureus (strain COL).